The sequence spans 249 residues: Inner membrane protein pE248R (249 aa).

The N-myristoyl glycine; by host moiety is linked to residue G2. The Cytoplasmic portion of the chain corresponds to 2–199 (GGSTSKNSFK…ADAISAVFKN (198 aa)). The helical transmembrane segment at 200 to 220 (IMVAAVVIVVIIVGFIAVFYF) threads the bilayer. Residues 221 to 249 (LHSRHRHEEEEEAEPLITSKILKNAAVSQ) lie on the Extracellular side of the membrane.

Belongs to the asfivirus E248R family. As to quaternary structure, interacts with A151R.

The protein localises to the host membrane. It is found in the virion membrane. Functionally, essential for viral fusion with host endosomal membrane and core release. This African swine fever virus (isolate Pig/Kenya/KEN-50/1950) (ASFV) protein is Inner membrane protein pE248R.